A 775-amino-acid chain; its full sequence is DENN domain-containing protein 1B (775 aa).

The 130-residue stretch at 14–143 (DLVLKVKCHA…YNHPVPKANT (130 aa)) folds into the uDENN domain. Residues 180–316 (GLPTIPESRN…VVSALKNKLK (137 aa)) enclose the cDENN domain. Residues 318-395 (QSTATGDGVA…DGRLAKLNAG (78 aa)) form the dDENN domain. Positions 398-402 (FSDVF) match the FXDXF motif motif. Position 520 is a phosphotyrosine (Y520). 4 positions are modified to phosphoserine: S535, S536, S549, and S552. The short motif at 566-575 (DLLGEILDTL) is the Clathrin box element. 2 disordered regions span residues 635 to 654 (DSAL…VSSS) and 671 to 706 (HLGA…KRET). Residues 639–651 (HGKHLPPSPRKRV) show a composition bias toward basic residues. 2 positions are modified to phosphoserine: S652 and S653. Residues 695–706 (QTDKGKTEKRET) show a composition bias toward basic and acidic residues.

As to quaternary structure, interacts with RAB35. Interacts with clathrin heavy chain/CLTC. Interacts with components of the adapter protein complex 2 (AP-2) AP2A2 and AP2B1. Interacts with CD3E. Phosphorylated on serine and/or threonine, possibly regulating the guanine nucleotide exchange factor (GEF) activity. In terms of tissue distribution, highly expressed in dendritic and natural killer cells and at lower levels in other myeloid lineage cells and in pituitary. Significantly up-regulated in effector memory T-cells as compared with naive T-cells.

Its subcellular location is the cytoplasm. The protein resides in the cytosol. The protein localises to the cytoplasmic vesicle. It localises to the clathrin-coated vesicle. In terms of biological role, guanine nucleotide exchange factor (GEF) for RAB35 that acts as a regulator of T-cell receptor (TCR) internalization in TH2 cells. Acts by promoting the exchange of GDP to GTP, converting inactive GDP-bound RAB35 into its active GTP-bound form. Plays a role in clathrin-mediated endocytosis. Controls cytokine production in TH2 lymphocytes by controlling the rate of TCR internalization and routing to endosomes: acts by mediating clathrin-mediated endocytosis of TCR via its interaction with the adapter protein complex 2 (AP-2) and GEF activity. Dysregulation leads to impaired TCR down-modulation and recycling, affecting cytokine production in TH2 cells. The chain is DENN domain-containing protein 1B from Homo sapiens (Human).